We begin with the raw amino-acid sequence, 271 residues long: S-adenosylmethionine decarboxylase proenzyme (271 aa).

Ser121 acts as the Schiff-base intermediate with substrate; via pyruvic acid in catalysis. Residue Ser121 is modified to Pyruvic acid (Ser); by autocatalysis. The active-site Proton acceptor; for processing activity is the His126. The active-site Proton donor; for catalytic activity is Cys149.

The protein belongs to the prokaryotic AdoMetDC family. Type 2 subfamily. As to quaternary structure, heterooctamer of four alpha and four beta chains arranged as a tetramer of alpha/beta heterodimers. Pyruvate is required as a cofactor. In terms of processing, is synthesized initially as an inactive proenzyme. Formation of the active enzyme involves a self-maturation process in which the active site pyruvoyl group is generated from an internal serine residue via an autocatalytic post-translational modification. Two non-identical subunits are generated from the proenzyme in this reaction, and the pyruvate is formed at the N-terminus of the alpha chain, which is derived from the carboxyl end of the proenzyme. The post-translation cleavage follows an unusual pathway, termed non-hydrolytic serinolysis, in which the side chain hydroxyl group of the serine supplies its oxygen atom to form the C-terminus of the beta chain, while the remainder of the serine residue undergoes an oxidative deamination to produce ammonia and the pyruvoyl group blocking the N-terminus of the alpha chain.

The catalysed reaction is S-adenosyl-L-methionine + H(+) = S-adenosyl 3-(methylsulfanyl)propylamine + CO2. Its pathway is amine and polyamine biosynthesis; S-adenosylmethioninamine biosynthesis; S-adenosylmethioninamine from S-adenosyl-L-methionine: step 1/1. Catalyzes the decarboxylation of S-adenosylmethionine to S-adenosylmethioninamine (dcAdoMet), the propylamine donor required for the synthesis of the polyamines spermine and spermidine from the diamine putrescine. This Clostridium beijerinckii (strain ATCC 51743 / NCIMB 8052) (Clostridium acetobutylicum) protein is S-adenosylmethionine decarboxylase proenzyme.